A 560-amino-acid chain; its full sequence is Chaperonin GroEL 2 (560 aa).

Residues Thr29–Pro32, Asp86–Thr90, Gly413, and Asp492 contribute to the ATP site. The disordered stretch occupies residues Asp520–Met542. Positions Ala530–Met542 are enriched in gly residues.

This sequence belongs to the chaperonin (HSP60) family. In terms of assembly, forms a cylinder of 14 subunits composed of two heptameric rings stacked back-to-back. Interacts with the co-chaperonin GroES.

Its subcellular location is the cytoplasm. It catalyses the reaction ATP + H2O + a folded polypeptide = ADP + phosphate + an unfolded polypeptide.. In terms of biological role, together with its co-chaperonin GroES, plays an essential role in assisting protein folding. The GroEL-GroES system forms a nano-cage that allows encapsulation of the non-native substrate proteins and provides a physical environment optimized to promote and accelerate protein folding. In Prochlorococcus marinus (strain NATL2A), this protein is Chaperonin GroEL 2.